A 371-amino-acid polypeptide reads, in one-letter code: Queuine tRNA-ribosyltransferase (371 aa).

Residue D89 is the Proton acceptor of the active site. Substrate is bound by residues 89–93 (DSGGF), D143, Q185, and G212. The tract at residues 243–249 (GVGTPED) is RNA binding. D262 serves as the catalytic Nucleophile. The RNA binding; important for wobble base 34 recognition stretch occupies residues 267 to 271 (TRNAR). The Zn(2+) site is built by C300, C302, C305, and H331.

This sequence belongs to the queuine tRNA-ribosyltransferase family. In terms of assembly, homodimer. Within each dimer, one monomer is responsible for RNA recognition and catalysis, while the other monomer binds to the replacement base PreQ1. It depends on Zn(2+) as a cofactor.

The enzyme catalyses 7-aminomethyl-7-carbaguanine + guanosine(34) in tRNA = 7-aminomethyl-7-carbaguanosine(34) in tRNA + guanine. It participates in tRNA modification; tRNA-queuosine biosynthesis. Functionally, catalyzes the base-exchange of a guanine (G) residue with the queuine precursor 7-aminomethyl-7-deazaguanine (PreQ1) at position 34 (anticodon wobble position) in tRNAs with GU(N) anticodons (tRNA-Asp, -Asn, -His and -Tyr). Catalysis occurs through a double-displacement mechanism. The nucleophile active site attacks the C1' of nucleotide 34 to detach the guanine base from the RNA, forming a covalent enzyme-RNA intermediate. The proton acceptor active site deprotonates the incoming PreQ1, allowing a nucleophilic attack on the C1' of the ribose to form the product. After dissociation, two additional enzymatic reactions on the tRNA convert PreQ1 to queuine (Q), resulting in the hypermodified nucleoside queuosine (7-(((4,5-cis-dihydroxy-2-cyclopenten-1-yl)amino)methyl)-7-deazaguanosine). The protein is Queuine tRNA-ribosyltransferase of Nitrosomonas europaea (strain ATCC 19718 / CIP 103999 / KCTC 2705 / NBRC 14298).